A 365-amino-acid chain; its full sequence is MTVPENAQHTAPDQTQHTAPDRTRQAQQAAPDTAGRRLIELMAGFWKTQAIYLAAESGLVDAIAAAGRAPAVELANRTGTDPDALGRLLLFLESLDVVSGEDPAGYALTPVGELLRTGTQDSMRDHVRIYGSHFYRAWGALDHSLRTGRSAFTEVYGSDLFRYLNQHPDLSLTYERAMVAGTPFFAQVPEVHDFSGARLIVDVAGGHGALLHEILKSCPEPRAVLFDAPHVIAETADRPIASEHGDRVTLVPGDFFEGVPQGGDVYLLSRILHCFDDEACLRILAHCRSAMAPGGRLVVVERLLTRGTGSSLAQGYNMHMLVVLGGGRERDEDAYRTLLEKAGFQLDSVTTLPLETHLMAATLRR.

Over residues 1–18 the composition is skewed to polar residues; sequence MTVPENAQHTAPDQTQHT. The disordered stretch occupies residues 1-32; the sequence is MTVPENAQHTAPDQTQHTAPDRTRQAQQAAPD. Residues Asp227, 253–255, and Arg270 each bind S-adenosyl-L-methionine; that span reads GDF. His273 (proton acceptor) is an active-site residue.

The protein belongs to the class I-like SAM-binding methyltransferase superfamily. Cation-independent O-methyltransferase family.

It carries out the reaction 3-amino-2,4-dihydroxybenzoate + S-adenosyl-L-methionine = 3-amino-2-hydroxy-4-methoxybenzoate + S-adenosyl-L-homocysteine + H(+). It functions in the pathway antibiotic biosynthesis. Part of a gene cluster involved in the biosynthesis of cremeomycin, a light-sensitive o-diazoquinone with antibacterial and antiproliferative effects. Catalyzes the methylation of the C4 hydroxyl group of 3-amino-2,4-dihydroxybenzoate (3,2,4-ADHBA) to form 3-amino-2-hydroxy-4-methoxybenzoate (3,2,4-AHMBA). In vitro, can also catalyze the methylation of 3-amino-4-hydroxybenzoate (3,4-AHBA). This chain is 3-amino-4-hydroxybenzoate 4-O-methyltransferase, found in Streptomyces cremeus.